An 87-amino-acid polypeptide reads, in one-letter code: Small ribosomal subunit protein uS17 (87 aa).

The protein belongs to the universal ribosomal protein uS17 family. As to quaternary structure, part of the 30S ribosomal subunit.

In terms of biological role, one of the primary rRNA binding proteins, it binds specifically to the 5'-end of 16S ribosomal RNA. This chain is Small ribosomal subunit protein uS17, found in Bacillus velezensis (strain DSM 23117 / BGSC 10A6 / LMG 26770 / FZB42) (Bacillus amyloliquefaciens subsp. plantarum).